The sequence spans 433 residues: Gamma-glutamyl phosphate reductase 1 (433 aa).

This sequence belongs to the gamma-glutamyl phosphate reductase family.

It localises to the cytoplasm. The enzyme catalyses L-glutamate 5-semialdehyde + phosphate + NADP(+) = L-glutamyl 5-phosphate + NADPH + H(+). It functions in the pathway amino-acid biosynthesis; L-proline biosynthesis; L-glutamate 5-semialdehyde from L-glutamate: step 2/2. In terms of biological role, catalyzes the NADPH-dependent reduction of L-glutamate 5-phosphate into L-glutamate 5-semialdehyde and phosphate. The product spontaneously undergoes cyclization to form 1-pyrroline-5-carboxylate. In Synechocystis sp. (strain ATCC 27184 / PCC 6803 / Kazusa), this protein is Gamma-glutamyl phosphate reductase 1.